The following is a 216-amino-acid chain: Cytidylate kinase (216 aa).

An ATP-binding site is contributed by 7 to 15 (GPAASGKGT).

The protein belongs to the cytidylate kinase family. Type 1 subfamily.

The protein localises to the cytoplasm. The enzyme catalyses CMP + ATP = CDP + ADP. It catalyses the reaction dCMP + ATP = dCDP + ADP. The polypeptide is Cytidylate kinase (Methylocella silvestris (strain DSM 15510 / CIP 108128 / LMG 27833 / NCIMB 13906 / BL2)).